The following is a 120-amino-acid chain: UPF0102 protein NT01CX_2205 (120 aa).

It belongs to the UPF0102 family.

The protein is UPF0102 protein NT01CX_2205 of Clostridium novyi (strain NT).